The following is a 246-amino-acid chain: Ribonuclease 3 (246 aa).

Positions leucine 16–glycine 144 constitute an RNase III domain. Glutamate 57 provides a ligand contact to Mg(2+). Aspartate 61 is an active-site residue. Mg(2+)-binding residues include aspartate 130 and glutamate 133. Glutamate 133 is a catalytic residue. Residues aspartate 171–serine 240 form the DRBM domain.

The protein belongs to the ribonuclease III family. As to quaternary structure, homodimer. Mg(2+) serves as cofactor.

The protein resides in the cytoplasm. It catalyses the reaction Endonucleolytic cleavage to 5'-phosphomonoester.. Digests double-stranded RNA. Involved in the processing of primary rRNA transcript to yield the immediate precursors to the large and small rRNAs (23S and 16S). Processes some mRNAs, and tRNAs when they are encoded in the rRNA operon. Processes pre-crRNA and tracrRNA of type II CRISPR loci if present in the organism. The protein is Ribonuclease 3 of Treponema denticola (strain ATCC 35405 / DSM 14222 / CIP 103919 / JCM 8153 / KCTC 15104).